The sequence spans 252 residues: Protein TRANSPARENT TESTA 16 (252 aa).

The 61-residue stretch at 1 to 61 (MGRGKIEIKK…GKLSEFCSEQ (61 aa)) folds into the MADS-box domain. Residues 86-176 (QEQLHHEMEL…YRWLHEHRAA (91 aa)) form the K-box domain. Residues 121–174 (NELDGLERQLEHSVLKVRERKNELMQQQLENLSRKRRMLEEDNNNMYRWLHEHR) are a coiled coil.

As to quaternary structure, interacts with AP1/AGL7, SEP1/AGL2, SEP2/AGL4, SEP3/AGL9 and AGL3/SEP4. As to expression, expressed in buds, flowers and immature seeds, but not in roots, stems, leaves, seedlings or siliques valves. Expression in seed coat is confined to the endothelium layer.

The protein resides in the nucleus. Its function is as follows. Transcription factor involved in the developmental regulation of the endothelium and in the accumulation of proanthocyanidins (PAs) or condensed tannins which give the seed its brown pigmentation after oxidation. Necessary for the normal activation of the BANYULS promoter in the endothelium body. Is required, together with AGL11/STK for the maternal control of endothelium formation, which is essential for female gametophyte development and fertilization, and seed formation. Interacts genetically with AGL1/SHP1 and AGL5/SHP2 in a partially antagonistic manner and represses AGL1/SHP1, AGL5/SHP2, and AGL8/FUL during flower development. Is essential for the coordination of cell divisions in ovule, seed coat development and endosperm formation. Mediates the crosstalk between endothelium and nucellus to ensure proper seed formation. Functions redundantly with AGL63/GOA to repress nucellus growth and promote its degeneration. Represses the negative regulator of autophagy and programmed cell death HVA22D in the proximal nucellus. Binds specifically to the CArG box DNA sequence 5'-CC (A/T)6 GG-3'. This chain is Protein TRANSPARENT TESTA 16 (TT16), found in Arabidopsis thaliana (Mouse-ear cress).